The primary structure comprises 861 residues: Leucine--tRNA ligase (861 aa).

Residues 42–52 (PYPSGKLHMGH) carry the 'HIGH' region motif. The 'KMSKS' region signature appears at 618–622 (KMSKS). K621 is a binding site for ATP.

It belongs to the class-I aminoacyl-tRNA synthetase family.

It is found in the cytoplasm. It catalyses the reaction tRNA(Leu) + L-leucine + ATP = L-leucyl-tRNA(Leu) + AMP + diphosphate. This is Leucine--tRNA ligase from Buchnera aphidicola subsp. Baizongia pistaciae (strain Bp).